Consider the following 519-residue polypeptide: Amphoterin-induced protein 2 (519 aa).

An N-terminal signal peptide occupies residues 1 to 38; that stretch reads MSLRFHTLPTLPRAVKPGCRELLCLLVIAVMVSPSASG. Positions 39–67 constitute an LRRNT domain; it reads MCPTACICATDIVSCTNKNLSKVPGNLFR. Topologically, residues 39-397 are extracellular; sequence MCPTACICAT…RSHAHEAFNT (359 aa). 2 disulfide bridges follow: C40/C46 and C44/C53. N-linked (GlcNAc...) asparagine glycosylation occurs at N57. 6 LRR repeats span residues 68–89, 93–114, 117–138, 141–162, 165–186, and 192–213; these read LIKR…WIPV, KLST…SFST, NLKC…TFQE, ALEV…AFGG, HLQK…LYTG, and DLTF…HINL. N103 carries an N-linked (GlcNAc...) asparagine glycan. The LRRCT domain maps to 227–283; the sequence is NPFVCDCSLYSLLIFWYRRHFSSVMDFKNDYTCRLWSDSRHSHQLQLLQESFLNCSY. Intrachain disulfides connect C231-C259 and C233-C281. N-linked (GlcNAc...) asparagine glycosylation is found at N280, N287, N344, N372, N380, N383, and N387. Residues 288–378 enclose the Ig-like C2-type domain; it reads GSFHALGFIH…RLLNETVDIM (91 aa). A disulfide bridge links C309 with C362. The chain crosses the membrane as a helical span at residues 398-418; it reads AFTTLAACVASIVLVLLYLYL. The Cytoplasmic portion of the chain corresponds to 419 to 519; the sequence is TPCPCKCKAK…FSDTPFVAST (101 aa). The segment at 498–519 is disordered; that stretch reads RAKSDSDSVNSVFSDTPFVAST.

It belongs to the immunoglobulin superfamily. AMIGO family. In terms of assembly, binds itself as well as AMIGO1 and AMIGO3. Highest level in cerebellum, retina, liver, and lung. Lower levels in cerebrum, kidney, small intestine, spleen and testis.

It localises to the cell membrane. Its subcellular location is the nucleus. Required for depolarization-dependent survival of cultured cerebellar granule neurons. May mediate homophilic as well as heterophilic cell-cell interaction with AMIGO1 or AMIGO3. May contribute to signal transduction through its intracellular domain. The polypeptide is Amphoterin-induced protein 2 (Mus musculus (Mouse)).